We begin with the raw amino-acid sequence, 38 residues long: Photosystem II reaction center protein L (38 aa).

The helical transmembrane segment at 17 to 37 (SLYWGLLLIFVLAILFSNYIF) threads the bilayer.

It belongs to the PsbL family. PSII is composed of 1 copy each of membrane proteins PsbA, PsbB, PsbC, PsbD, PsbE, PsbF, PsbH, PsbI, PsbJ, PsbK, PsbL, PsbM, PsbT, PsbX, PsbY, PsbZ, Psb30/Ycf12, at least 3 peripheral proteins of the oxygen-evolving complex and a large number of cofactors. It forms dimeric complexes.

The protein resides in the plastid. It is found in the chloroplast thylakoid membrane. Functionally, one of the components of the core complex of photosystem II (PSII). PSII is a light-driven water:plastoquinone oxidoreductase that uses light energy to abstract electrons from H(2)O, generating O(2) and a proton gradient subsequently used for ATP formation. It consists of a core antenna complex that captures photons, and an electron transfer chain that converts photonic excitation into a charge separation. This subunit is found at the monomer-monomer interface and is required for correct PSII assembly and/or dimerization. This Chlorokybus atmophyticus (Soil alga) protein is Photosystem II reaction center protein L.